The chain runs to 847 residues: Histidine decarboxylase (847 aa).

Substrate contacts are provided by Phe-80 and His-193. Lys-304 carries the post-translational modification N6-(pyridoxal phosphate)lysine. Polar residues predominate over residues 575–605 (GNGATRTSTTNSYGHTTSAAQANSERQASIQ). Disordered regions lie at residues 575-662 (GNGA…RSSP), 769-798 (QSQSLGNNSSTESSSLSGGATPTPTPMSSL), and 813-847 (SQPMLSAHGIGEGQREQGSDSDATVCSTTSSMESL). A compositionally biased stretch (acidic residues) spans 606-616 (EDNEESPEETE). Composition is skewed to low complexity over residues 634 to 657 (SLSTPSRSCSSSSHSLIHSLTQSS) and 769 to 787 (QSQSLGNNSSTESSSLSGG). Residues 832-847 (DSDATVCSTTSSMESL) are compositionally biased toward polar residues.

It belongs to the group II decarboxylase family. Homodimer. It depends on pyridoxal 5'-phosphate as a cofactor. As to expression, localized primarily to the photoreceptors, in the eye.

The catalysed reaction is L-histidine + H(+) = histamine + CO2. Required in photoreceptor transmitter synthesis. Catlayzes the conversion of L-histidine to histamine. The polypeptide is Histidine decarboxylase (Hdc) (Drosophila melanogaster (Fruit fly)).